Here is a 329-residue protein sequence, read N- to C-terminus: MASQLTDAFARKFYYLRLSITDVCNFRCTYCLPDGYKPSGVTNKGFLTVDEIRRVTRAFASLGTEKVRLTGGEPSLRRDFTDIIAAVRENDAIRQIAVTTNGYRLERDVANWRDAGLTGINVSVDSLDARQFHAITGQDKFNQVMAGIDAAFEAGFEKVKVNTVLMRDVNHHQLDTFLNWIQHRPIQLRFIELMETGEGSELFRKHHISGQVLRDELLRRGWIHQLRQRSDGPAQVFCHPDYAGEIGLIMPYEKDFCATCNRLRVSSIGKLYLCLFGEGGVNLRDLLEDDTQQQALEARISVALREKKQTHFLHQNNTGITQNLSYIGG.

Residues 8–234 enclose the Radical SAM core domain; it reads AFARKFYYLR…QLRQRSDGPA (227 aa). GTP is bound at residue Arg17. [4Fe-4S] cluster contacts are provided by Cys24 and Cys28. Residue Tyr30 participates in S-adenosyl-L-methionine binding. Cys31 provides a ligand contact to [4Fe-4S] cluster. Arg68 serves as a coordination point for GTP. Gly72 lines the S-adenosyl-L-methionine pocket. Residue Thr99 coordinates GTP. Ser123 serves as a coordination point for S-adenosyl-L-methionine. Lys160 is a GTP binding site. Residue Met194 coordinates S-adenosyl-L-methionine. 2 residues coordinate [4Fe-4S] cluster: Cys257 and Cys260. 262–264 is a GTP binding site; the sequence is RLR. Residue Cys274 participates in [4Fe-4S] cluster binding.

The protein belongs to the radical SAM superfamily. MoaA family. Monomer and homodimer. It depends on [4Fe-4S] cluster as a cofactor.

The catalysed reaction is GTP + AH2 + S-adenosyl-L-methionine = (8S)-3',8-cyclo-7,8-dihydroguanosine 5'-triphosphate + 5'-deoxyadenosine + L-methionine + A + H(+). Its pathway is cofactor biosynthesis; molybdopterin biosynthesis. Catalyzes the cyclization of GTP to (8S)-3',8-cyclo-7,8-dihydroguanosine 5'-triphosphate. In Shigella boydii serotype 18 (strain CDC 3083-94 / BS512), this protein is GTP 3',8-cyclase.